Here is a 373-residue protein sequence, read N- to C-terminus: NAD(P)H-quinone oxidoreductase subunit 1 (373 aa).

The next 8 membrane-spanning stretches (helical) occupy residues 28–48 (LLWL…GVLV), 98–118 (LLFT…WLII), 129–149 (VGVG…GLLM), 177–197 (LALA…VDIV), 205–225 (ILSW…ICAL), 267–287 (VLSA…PIPV), 309–329 (TVGI…AILL), and 348–368 (FLLP…LAFP).

Belongs to the complex I subunit 1 family. As to quaternary structure, NDH-1 is composed of at least 11 different subunits.

It localises to the cellular thylakoid membrane. The enzyme catalyses a plastoquinone + NADH + (n+1) H(+)(in) = a plastoquinol + NAD(+) + n H(+)(out). The catalysed reaction is a plastoquinone + NADPH + (n+1) H(+)(in) = a plastoquinol + NADP(+) + n H(+)(out). In terms of biological role, NDH-1 shuttles electrons from an unknown electron donor, via FMN and iron-sulfur (Fe-S) centers, to quinones in the respiratory and/or the photosynthetic chain. The immediate electron acceptor for the enzyme in this species is believed to be plastoquinone. Couples the redox reaction to proton translocation, and thus conserves the redox energy in a proton gradient. This is NAD(P)H-quinone oxidoreductase subunit 1 from Synechococcus sp. (strain CC9605).